Here is a 593-residue protein sequence, read N- to C-terminus: Uroporphyrinogen-III C-methyltransferase (593 aa).

The disordered stretch occupies residues 278–303 (ETSSSPNKKTKQETVTEGVVPPTDEN).

It belongs to the precorrin methyltransferase family.

It catalyses the reaction uroporphyrinogen III + 2 S-adenosyl-L-methionine = precorrin-2 + 2 S-adenosyl-L-homocysteine + H(+). In terms of biological role, siroheme synthase involved in methionine biosynthesis. The sequence is that of Uroporphyrinogen-III C-methyltransferase from Saccharomyces cerevisiae (strain ATCC 204508 / S288c) (Baker's yeast).